A 246-amino-acid polypeptide reads, in one-letter code: Pyridoxine 5'-phosphate synthase (246 aa).

A 3-amino-2-oxopropyl phosphate-binding site is contributed by Asn12. Residue 14 to 15 coordinates 1-deoxy-D-xylulose 5-phosphate; that stretch reads DH. 3-amino-2-oxopropyl phosphate is bound at residue Arg23. His48 functions as the Proton acceptor in the catalytic mechanism. The 1-deoxy-D-xylulose 5-phosphate site is built by Arg50 and His55. Residue Glu75 is the Proton acceptor of the active site. Thr105 lines the 1-deoxy-D-xylulose 5-phosphate pocket. Residue His196 is the Proton donor of the active site. 3-amino-2-oxopropyl phosphate is bound by residues Gly197 and 218–219; that span reads GH.

Belongs to the PNP synthase family. As to quaternary structure, homooctamer; tetramer of dimers.

Its subcellular location is the cytoplasm. The enzyme catalyses 3-amino-2-oxopropyl phosphate + 1-deoxy-D-xylulose 5-phosphate = pyridoxine 5'-phosphate + phosphate + 2 H2O + H(+). It functions in the pathway cofactor biosynthesis; pyridoxine 5'-phosphate biosynthesis; pyridoxine 5'-phosphate from D-erythrose 4-phosphate: step 5/5. Functionally, catalyzes the complicated ring closure reaction between the two acyclic compounds 1-deoxy-D-xylulose-5-phosphate (DXP) and 3-amino-2-oxopropyl phosphate (1-amino-acetone-3-phosphate or AAP) to form pyridoxine 5'-phosphate (PNP) and inorganic phosphate. The sequence is that of Pyridoxine 5'-phosphate synthase from Nitrosococcus oceani (strain ATCC 19707 / BCRC 17464 / JCM 30415 / NCIMB 11848 / C-107).